The primary structure comprises 255 residues: Antigen LPMC-61 (255 aa).

Tandem repeats lie at residues 18-48 (WPER…QKQQ), 49-57 (WPEGQRQQL), 58-65 (WPEQQQQQ), 66-78 (WPEQ…QQQQ), 79-90 (WPQQQPQMQQEQ), 91-103 (WPQQ…QQQQ), 104-140 (WPQQ…LQQQ), 141-152 (WSEQQQQQQQQQ), 153-164 (WPEQPEQQQQQQ), 165-172 (WPEQQQQQ), 173-192 (WSDQ…QQQQ), and 193-210 (WPQQ…QQQQ). Residues 18–90 (WPERQQQQQP…QQQPQMQQEQ (73 aa)) are disordered. The 12 X approximate tandem repeats, Gln-rich stretch occupies residues 18–210 (WPERQQQQQP…QQQQQQQQQQ (193 aa)). The span at 149 to 210 (QQQQWPEQPE…QQQQQQQQQQ (62 aa)) shows a compositional bias: low complexity. Residues 149–224 (QQQQWPEQPE…DGVGIVVPYL (76 aa)) form a disordered region.

In terms of assembly, may be covalently linked by disulfide bonds to other polypeptides to form the 80 kDa antigen.

In terms of biological role, unknown. The Gln-rich tandem repeats may be important for an unknown aspect of the parasitic life cycle. May be an important immunogen. The polypeptide is Antigen LPMC-61 (Eimeria tenella (Coccidian parasite)).